Here is a 259-residue protein sequence, read N- to C-terminus: Sesquipedalian-2 (259 aa).

One can recognise a PH domain in the interval 17 to 121 (PADHTGFLRS…WVKALSRASF (105 aa)). The stretch at 124-150 (MRLVVRELESQLQDARQSLALHRCASQ) forms a coiled coil. The disordered stretch occupies residues 155-178 (SCSKSQAPDHRAPDPENGHFLPRD). Positions 161-178 (APDHRAPDPENGHFLPRD) are enriched in basic and acidic residues. The short motif at 223–235 (CFSTLHDWYGKEI) is the F&amp;H element.

This sequence belongs to the sesquipedalian family. As to quaternary structure, forms homodimers and heterodimers with PHETA1. Interacts with OCRL and INPP5B.

It localises to the early endosome. The protein localises to the recycling endosome. Its subcellular location is the golgi apparatus. It is found in the trans-Golgi network. The protein resides in the cytoplasmic vesicle. It localises to the clathrin-coated vesicle. In terms of biological role, plays a role in endocytic trafficking. Required for receptor recycling from endosomes, both to the trans-Golgi network and the plasma membrane. The sequence is that of Sesquipedalian-2 from Mus musculus (Mouse).